The following is a 372-amino-acid chain: Fork head domain-containing protein FD4 (372 aa).

Positions 12–103 form a DNA-binding region, fork-head; it reads QKPPYSYISL…FDMFENGSLL (92 aa). 2 disordered regions span residues 225-245 and 261-281; these read ESLI…DEDD and PTTP…RTED.

In terms of tissue distribution, expressed in early embryogenesis in 14 symmetrical pairs of segmentally arranged neuroblasts. Also, later in embryogenesis, in a cluster of cells in head region.

The protein localises to the nucleus. Functionally, involved in development during embryogenesis. This Drosophila melanogaster (Fruit fly) protein is Fork head domain-containing protein FD4 (fd96Ca).